We begin with the raw amino-acid sequence, 285 residues long: Phosphate import ATP-binding protein PstB (285 aa).

In terms of domain architecture, ABC transporter spans 39-280 (LEVSDLQLWY…PAKKQTEDYI (242 aa)). ATP is bound at residue 71 to 78 (GPSGCGKS).

It belongs to the ABC transporter superfamily. Phosphate importer (TC 3.A.1.7) family. The complex is composed of two ATP-binding proteins (PstB), two transmembrane proteins (PstC and PstA) and a solute-binding protein (PstS).

The protein resides in the cell inner membrane. It catalyses the reaction phosphate(out) + ATP + H2O = ADP + 2 phosphate(in) + H(+). Part of the ABC transporter complex PstSACB involved in phosphate import. Responsible for energy coupling to the transport system. The protein is Phosphate import ATP-binding protein PstB of Alkalilimnicola ehrlichii (strain ATCC BAA-1101 / DSM 17681 / MLHE-1).